Here is a 333-residue protein sequence, read N- to C-terminus: L-lactate dehydrogenase B chain (333 aa).

NAD(+) is bound by residues glycine 29–lysine 57 and arginine 99. Substrate is bound by residues arginine 106, asparagine 138, and arginine 169. Position 138 (asparagine 138) interacts with NAD(+). The active-site Proton acceptor is the histidine 193. Position 248 (threonine 248) interacts with substrate.

The protein belongs to the LDH/MDH superfamily. LDH family. Homotetramer.

Its subcellular location is the cytoplasm. The catalysed reaction is (S)-lactate + NAD(+) = pyruvate + NADH + H(+). It functions in the pathway fermentation; pyruvate fermentation to lactate; (S)-lactate from pyruvate: step 1/1. Its function is as follows. Interconverts simultaneously and stereospecifically pyruvate and lactate with concomitant interconversion of NADH and NAD(+). The sequence is that of L-lactate dehydrogenase B chain (LDHB) from Caiman crocodilus apaporiensis (Rio Apaporis caiman).